The chain runs to 376 residues: TelA-like protein SE_1089 (376 aa).

It belongs to the TelA family.

In Staphylococcus epidermidis (strain ATCC 12228 / FDA PCI 1200), this protein is TelA-like protein SE_1089.